Reading from the N-terminus, the 228-residue chain is 7-cyano-7-deazaguanine synthase (228 aa).

Y9–M19 contributes to the ATP binding site. Residues C189, C199, C202, and C205 each contribute to the Zn(2+) site.

This sequence belongs to the QueC family. The cofactor is Zn(2+).

It carries out the reaction 7-carboxy-7-deazaguanine + NH4(+) + ATP = 7-cyano-7-deazaguanine + ADP + phosphate + H2O + H(+). It functions in the pathway purine metabolism; 7-cyano-7-deazaguanine biosynthesis. Its function is as follows. Catalyzes the ATP-dependent conversion of 7-carboxy-7-deazaguanine (CDG) to 7-cyano-7-deazaguanine (preQ(0)). This is 7-cyano-7-deazaguanine synthase from Geotalea uraniireducens (strain Rf4) (Geobacter uraniireducens).